A 324-amino-acid polypeptide reads, in one-letter code: Putative arsenical pump-driving ATPase (324 aa).

21–28 (GKGGVGKT) lines the ATP pocket.

It belongs to the arsA ATPase family.

The enzyme catalyses arsenite(in) + ATP + H2O = arsenite(out) + ADP + phosphate + H(+). Its function is as follows. Anion-transporting ATPase. Catalyzes the extrusion of arsenite. The chain is Putative arsenical pump-driving ATPase from Methanothermobacter thermautotrophicus (strain ATCC 29096 / DSM 1053 / JCM 10044 / NBRC 100330 / Delta H) (Methanobacterium thermoautotrophicum).